Here is a 456-residue protein sequence, read N- to C-terminus: Transcription factor tau subunit sfc1 (456 aa).

Disordered regions lie at residues 394–416 (DRYS…GLNT) and 437–456 (HEGF…IFGD). Residues 407-416 (LNDTVRGLNT) are compositionally biased toward polar residues. Residues 441 to 456 (EDLEEIDDDYDDIFGD) show a composition bias toward acidic residues.

In terms of assembly, component of the TFIIIC complex including sfc1, sfc3, sfc4, sfc6 and sfc7. The subunits are organized in two globular domains, tauA and tauB, connected by a proteolysis-sensitive and flexible linker. Interacts with sfc3, sfc4 and sfc6. In terms of processing, phosphorylated.

Its subcellular location is the nucleus. In terms of biological role, TFIIIC mediates tRNA and 5S RNA gene activation by binding to intragenic promoter elements. Upstream of the transcription start site, TFIIIC assembles the initiation complex TFIIIB-TFIIIC-tDNA, which is sufficient for RNA polymerase III recruitment and function. Part of the tauA domain of TFIIIC that binds boxA DNA promoter sites of tRNA and similar genes. Participates in the interconnection of tauA with tauB via its contacts with sfc3 and sfc6. Serves as a scaffold critical for tauA-DNA spatial configuration and tauB-DNA stability. Localizes to chromatin insulator sequence without recruiting RNA polymerase III and plays a role in nuclear organization. The sequence is that of Transcription factor tau subunit sfc1 (sfc1) from Schizosaccharomyces pombe (strain 972 / ATCC 24843) (Fission yeast).